We begin with the raw amino-acid sequence, 249 residues long: Acidic leucine-rich nuclear phosphoprotein 32 family member A (249 aa).

T15 is modified (phosphothreonine). S17 is subject to Phosphoserine. 4 LRR repeats span residues 18-38 (DVKE…EGLT), 43-64 (ELEF…PKLN), 65-87 (KLKK…AEKC), and 89-110 (NLTH…EPLK). The LRRCT domain occupies 123–161 (CEVTNLNDYRENVFKLLPQLTYLDGYDRDDKEAPDSDAE). Basic and acidic residues predominate over residues 147-156 (GYDRDDKEAP). The disordered stretch occupies residues 147–249 (GYDRDDKEAP…EPEDEGEDDD (103 aa)). The segment at 150 to 174 (RDDKEAPDSDAEGYVEGLDDEEEDE) is necessary for tumor-suppressive function. The span at 157–230 (DSDAEGYVEG…DEEDEEELGE (74 aa)) shows a compositional bias: acidic residues. Phosphoserine; by CK2 is present on residues S158 and S204. Residues 165 to 249 (EGLDDEEEDE…EPEDEGEDDD (85 aa)) form an interaction with E4F1 region.

Belongs to the ANP32 family. Component of the SET complex, composed of at least ANP32A, APEX1, HMGB2, NME1, SET and TREX1. Directly interacts with SET. Interacts with ATXN1/SCA1. Interacts with MAP1B. Interacts with ELAVL1. Part of the INHAT (inhibitor of histone acetyltransferases) complex. Interacts with E4F1. As to quaternary structure, (Microbial infection) Interacts (via C-terminus) with influenza virus A protein PB2; this interaction promotes viral replication. In terms of assembly, (Microbial infection) Interacts (via C-terminus) with influenza virus B protein PB2; this interaction promotes viral replication. (Microbial infection) Interacts (via C-terminus) with influenza virus C protein PB2; this interaction promotes viral replication by bridging viral replicase dimers together. Phosphorylated on serine residues, at least in part by casein kinase 2/CK2. In terms of processing, the N-terminus is blocked. Post-translationally, some glutamate residues are glycylated by TTLL8. This modification occurs exclusively on glutamate residues and results in a glycine chain on the gamma-carboxyl group. Expressed in all tissues tested. Highly expressed in kidney and skeletal muscle, moderate levels of expression in brain, placenta and pancreas, and weakly expressed in lung. Found in all regions of the brain examined (amygdala, caudate nucleus, corpus callosum, hippocampus and thalamus), with highest levels in amygdala.

It is found in the nucleus. Its subcellular location is the cytoplasm. The protein localises to the endoplasmic reticulum. In terms of biological role, multifunctional protein that is involved in the regulation of many processes including tumor suppression, apoptosis, cell cycle progression or transcription. Promotes apoptosis by favouring the activation of caspase-9/CASP9 and allowing apoptosome formation. In addition, plays a role in the modulation of histone acetylation and transcription as part of the INHAT (inhibitor of histone acetyltransferases) complex. Inhibits the histone-acetyltranferase activity of EP300/CREBBP (CREB-binding protein) and EP300/CREBBP-associated factor by histone masking. Preferentially binds to unmodified histone H3 and sterically inhibiting its acetylation and phosphorylation leading to cell growth inhibition. Participates in other biochemical processes such as regulation of mRNA nuclear-to-cytoplasmic translocation and stability by its association with ELAVL1 (Hu-antigen R). Plays a role in E4F1-mediated transcriptional repression as well as inhibition of protein phosphatase 2A. Functionally, (Microbial infection) Plays an essential role in influenza A, B and C viral genome replication. Mechanistically, mediates the assembly of the viral replicase asymmetric dimers composed of PB1, PB2 and PA via its N-terminal region. Also plays an essential role in foamy virus mRNA export from the nucleus. The sequence is that of Acidic leucine-rich nuclear phosphoprotein 32 family member A (ANP32A) from Homo sapiens (Human).